Reading from the N-terminus, the 233-residue chain is Lipoprotein-releasing system ATP-binding protein LolD (233 aa).

An ABC transporter domain is found at 9-233 (LAINAVSKVF…GILSQSETHR (225 aa)). 45-52 (GSSGSGKS) provides a ligand contact to ATP.

The protein belongs to the ABC transporter superfamily. Lipoprotein translocase (TC 3.A.1.125) family. In terms of assembly, the complex is composed of two ATP-binding proteins (LolD) and two transmembrane proteins (LolC and LolE).

It localises to the cell inner membrane. Part of the ABC transporter complex LolCDE involved in the translocation of mature outer membrane-directed lipoproteins, from the inner membrane to the periplasmic chaperone, LolA. Responsible for the formation of the LolA-lipoprotein complex in an ATP-dependent manner. The sequence is that of Lipoprotein-releasing system ATP-binding protein LolD from Shewanella denitrificans (strain OS217 / ATCC BAA-1090 / DSM 15013).